Reading from the N-terminus, the 449-residue chain is Elongation factor 1-alpha (449 aa).

A tr-type G domain is found at 5–234 (KQHVSIVVIG…DNCDPPKRPV (230 aa)). A G1 region spans residues 14–21 (GHVDSGKS). 14–21 (GHVDSGKS) provides a ligand contact to GTP. Residue Lys-55 is modified to N6,N6-dimethyllysine. The segment at 70–74 (GITID) is G2. The residue at position 79 (Lys-79) is an N6,N6,N6-trimethyllysine. A G3 region spans residues 91–94 (DAPG). GTP contacts are provided by residues 91–95 (DAPGH) and 153–156 (NKMD). The tract at residues 153–156 (NKMD) is G4. At Lys-187 the chain carries N6,N6,N6-trimethyllysine. The segment at 194–196 (SGW) is G5. N6-methyllysine is present on Lys-265. N6,N6,N6-trimethyllysine is present on residues Lys-310 and Lys-400.

Belongs to the TRAFAC class translation factor GTPase superfamily. Classic translation factor GTPase family. EF-Tu/EF-1A subfamily.

The protein resides in the cytoplasm. Its function is as follows. This protein promotes the GTP-dependent binding of aminoacyl-tRNA to the A-site of ribosomes during protein biosynthesis. In Pyropia yezoensis (Susabi-nori), this protein is Elongation factor 1-alpha.